Reading from the N-terminus, the 248-residue chain is Probable transcriptional regulatory protein PSPTO_3980 (248 aa).

Belongs to the TACO1 family.

It localises to the cytoplasm. The chain is Probable transcriptional regulatory protein PSPTO_3980 from Pseudomonas syringae pv. tomato (strain ATCC BAA-871 / DC3000).